Consider the following 462-residue polypeptide: UPF0236 protein TTE2489 (462 aa).

Belongs to the UPF0236 family.

In Caldanaerobacter subterraneus subsp. tengcongensis (strain DSM 15242 / JCM 11007 / NBRC 100824 / MB4) (Thermoanaerobacter tengcongensis), this protein is UPF0236 protein TTE2489.